The primary structure comprises 552 residues: MAGUK p55 subfamily member 2 (552 aa).

2 L27 domains span residues 8 to 59 (SESA…EETK) and 60 to 118 (LEAV…YETP). At serine 42 the chain carries Phosphoserine. Threonine 117 carries the post-translational modification Phosphothreonine. Serine 121 is modified (phosphoserine). Positions 140–219 (MVGIRKTAGE…SVILKILPSY (80 aa)) constitute a PDZ domain. The SH3 domain maps to 225 to 293 (PRQVFVKCHF…PSQLLEEKRK (69 aa)). A Guanylate kinase-like domain is found at 350–537 (RKTLVLIGAQ…TFRELQTAME (188 aa)).

It belongs to the MAGUK family. In terms of assembly, can homomultimerise. Interacts with CACNG2. Interacts (via the SH3-Guanylate kinase-like sub-module) with DLG4/PSD95 and DLGAP1/GKAP. Interacts (via the PDZ domain) with CADM1 (via C-terminus). Interacts with KCNN2/SK2 (via N-terminal domain). Interacts with SRC. Post-translationally, phosphorylated by SRC. As to expression, expressed in pyramidal neurons of CA1 region of the hippocampus.

Its subcellular location is the cell projection. The protein resides in the dendrite. It is found in the postsynaptic density. It localises to the cytoplasm. The protein localises to the cytoskeleton. Its subcellular location is the membrane. Postsynaptic MAGUK scaffold protein that links CADM1 cell adhesion molecules to core components of the postsynaptic density. In CA1 pyramidal neurons, required for synaptic KCNN2-containing channel function and long-term potentiation expression. Seems to negatively regulate SRC function in epithelial cells. The chain is MAGUK p55 subfamily member 2 from Mus musculus (Mouse).